Here is a 49-residue protein sequence, read N- to C-terminus: uncharacterized protein (49 aa).

The helical transmembrane segment at 5 to 27 (ILEILSAFIRILFKLLYCWALFF) threads the bilayer.

The protein resides in the membrane. This is an uncharacterized protein from Saccharomyces cerevisiae (strain ATCC 204508 / S288c) (Baker's yeast).